The following is an 83-amino-acid chain: MKASMFLALAGLVLLFVVGYASESEEKEFPRELLSKVFAVDDFKGEERGCKGFGDSCTPGKNECCPNYACSSKHKWCKVYLGK.

An N-terminal signal peptide occupies residues 1-21 (MKASMFLALAGLVLLFVVGYA). The propeptide occupies 22–48 (SESEEKEFPRELLSKVFAVDDFKGEER). 3 disulfides stabilise this stretch: C50–C65, C57–C70, and C64–C77. L81 carries the post-translational modification Leucine amide.

Belongs to the neurotoxin 10 (Hwtx-1) family. 15 (Hntx-3) subfamily. Monomer. As to expression, expressed by the venom gland.

Its subcellular location is the secreted. Selective antagonist of neuronal tetrodotoxin (TTX)-sensitive voltage-gated sodium channels (IC(50)=1270 nM on Nav1.1/SCN1A, 270 nM on Nav1.2/SCN2A, 491 nM on Nav1.3/SCN3A and 232 nM on Nav1.7/SCN9A). This toxin suppress Nav1.7 current amplitude without significantly altering the activation, inactivation, and repriming kinetics. Short extreme depolarizations partially activate the toxin-bound channel, indicating voltage-dependent inhibition of this toxin. This toxin increases the deactivation of the Nav1.7 current after extreme depolarizations. The toxin-Nav1.7 complex is gradually dissociated upon prolonged strong depolarizations in a voltage-dependent manner, and the unbound toxin rebinds to Nav1.7 after a long repolarization. Moreover, analysis of chimeric channels showed that the DIIS3-S4 linker is critical for toxin binding to Nav1.7. These data are consistent with this toxin interacting with Nav1.7 site 4 and trapping the domain II voltage sensor in the closed state. This Cyriopagopus hainanus (Chinese bird spider) protein is Hainantoxin-III 7.